A 325-amino-acid chain; its full sequence is Ribose-phosphate pyrophosphokinase 2 (325 aa).

96–101 (RQDKKD) is a binding site for ATP. Mg(2+)-binding residues include Asp135, His137, Asp146, and Asp150. His137 is a binding site for ATP. Residues 219-234 (KDRVAILVDDMADTCG) are binding of phosphoribosylpyrophosphate.

It belongs to the ribose-phosphate pyrophosphokinase family. As to quaternary structure, homodimer. The active form is probably a hexamer composed of 3 homodimers. Requires Mg(2+) as cofactor.

It catalyses the reaction D-ribose 5-phosphate + ATP = 5-phospho-alpha-D-ribose 1-diphosphate + AMP + H(+). Its pathway is metabolic intermediate biosynthesis; 5-phospho-alpha-D-ribose 1-diphosphate biosynthesis; 5-phospho-alpha-D-ribose 1-diphosphate from D-ribose 5-phosphate (route I): step 1/1. With respect to regulation, activated by magnesium and inorganic phosphate. Competitively or non-competitively inhibited by ADP, 2,3-bisphosphoglyceride or GDP. In terms of biological role, catalyzes the synthesis of phosphoribosylpyrophosphate (PRPP) that is essential for nucleotide synthesis. This Gallus gallus (Chicken) protein is Ribose-phosphate pyrophosphokinase 2 (PRPS2).